Here is a 103-residue protein sequence, read N- to C-terminus: Co-chaperonin GroES (103 aa).

This sequence belongs to the GroES chaperonin family. In terms of assembly, heptamer of 7 subunits arranged in a ring. Interacts with the chaperonin GroEL.

The protein localises to the cytoplasm. In terms of biological role, together with the chaperonin GroEL, plays an essential role in assisting protein folding. The GroEL-GroES system forms a nano-cage that allows encapsulation of the non-native substrate proteins and provides a physical environment optimized to promote and accelerate protein folding. GroES binds to the apical surface of the GroEL ring, thereby capping the opening of the GroEL channel. This is Co-chaperonin GroES from Prochlorococcus marinus (strain MIT 9215).